Consider the following 272-residue polypeptide: Phosphatidylglycerol--prolipoprotein diacylglyceryl transferase (272 aa).

4 consecutive transmembrane segments (helical) span residues 24–44, 64–84, 99–119, and 125–145; these read WYAL…RHLV, LLVY…VVFY, LWQG…GVML, and GLPT…GLFL. Position 147 (arginine 147) interacts with a 1,2-diacyl-sn-glycero-3-phospho-(1'-sn-glycerol). A run of 3 helical transmembrane segments spans residues 185-205, 209-229, and 245-265; these read AAAE…LGAL, GLVT…CEFF, and MGML…AFAY.

This sequence belongs to the Lgt family.

It is found in the cell inner membrane. The catalysed reaction is L-cysteinyl-[prolipoprotein] + a 1,2-diacyl-sn-glycero-3-phospho-(1'-sn-glycerol) = an S-1,2-diacyl-sn-glyceryl-L-cysteinyl-[prolipoprotein] + sn-glycerol 1-phosphate + H(+). It functions in the pathway protein modification; lipoprotein biosynthesis (diacylglyceryl transfer). Catalyzes the transfer of the diacylglyceryl group from phosphatidylglycerol to the sulfhydryl group of the N-terminal cysteine of a prolipoprotein, the first step in the formation of mature lipoproteins. The chain is Phosphatidylglycerol--prolipoprotein diacylglyceryl transferase from Methylocella silvestris (strain DSM 15510 / CIP 108128 / LMG 27833 / NCIMB 13906 / BL2).